Here is a 145-residue protein sequence, read N- to C-terminus: 3-hydroxyacyl-[acyl-carrier-protein] dehydratase FabZ (145 aa).

The active site involves His48.

Belongs to the thioester dehydratase family. FabZ subfamily.

The protein resides in the cytoplasm. It carries out the reaction a (3R)-hydroxyacyl-[ACP] = a (2E)-enoyl-[ACP] + H2O. Its function is as follows. Involved in unsaturated fatty acids biosynthesis. Catalyzes the dehydration of short chain beta-hydroxyacyl-ACPs and long chain saturated and unsaturated beta-hydroxyacyl-ACPs. The polypeptide is 3-hydroxyacyl-[acyl-carrier-protein] dehydratase FabZ (Campylobacter hominis (strain ATCC BAA-381 / DSM 21671 / CCUG 45161 / LMG 19568 / NCTC 13146 / CH001A)).